Reading from the N-terminus, the 50-residue chain is Sperm protamine P1 (50 aa).

The protein belongs to the protamine P1 family. As to expression, testis.

The protein resides in the nucleus. The protein localises to the chromosome. Its function is as follows. Protamines substitute for histones in the chromatin of sperm during the haploid phase of spermatogenesis. They compact sperm DNA into a highly condensed, stable and inactive complex. In Natalus stramineus (Mexican funnel-eared bat), this protein is Sperm protamine P1 (PRM1).